A 141-amino-acid chain; its full sequence is ATP synthase epsilon chain (141 aa).

Belongs to the ATPase epsilon chain family. In terms of assembly, F-type ATPases have 2 components, CF(1) - the catalytic core - and CF(0) - the membrane proton channel. CF(1) has five subunits: alpha(3), beta(3), gamma(1), delta(1), epsilon(1). CF(0) has three main subunits: a, b and c.

It localises to the cell inner membrane. Its function is as follows. Produces ATP from ADP in the presence of a proton gradient across the membrane. The chain is ATP synthase epsilon chain from Pseudomonas savastanoi pv. phaseolicola (strain 1448A / Race 6) (Pseudomonas syringae pv. phaseolicola (strain 1448A / Race 6)).